The sequence spans 570 residues: uncharacterized protein (570 aa).

A compositionally biased stretch (low complexity) spans 1 to 15 (MTESIISSRTASISS). The interval 1-34 (MTESIISSRTASISSKEGYEIRQGSTDSSSLDLE) is disordered. Serine 14 carries the phosphoserine modification. The next 12 membrane-spanning stretches (helical) occupy residues 96–116 (WKLY…LFIG), 141–161 (NLNT…HYIM), 163–183 (TFPL…IVFL), 198–218 (FFLG…MGMF), 229–249 (PVFW…AYGL), 261–281 (LFMI…FFYY), 328–348 (PITW…NLAY), 369–389 (VALA…MYLI), 397–417 (AMFW…LPWS), 423–443 (LATM…LGWT), 457–477 (GLMF…LWQS), and 485–505 (PAWI…YLVA).

It belongs to the major facilitator superfamily. Allantoate permease family.

It is found in the endoplasmic reticulum. The protein localises to the membrane. This is an uncharacterized protein from Schizosaccharomyces pombe (strain 972 / ATCC 24843) (Fission yeast).